Reading from the N-terminus, the 502-residue chain is Aspartyl/glutamyl-tRNA(Asn/Gln) amidotransferase subunit B (502 aa).

It belongs to the GatB/GatE family. GatB subfamily. In terms of assembly, heterotrimer of A, B and C subunits.

It catalyses the reaction L-glutamyl-tRNA(Gln) + L-glutamine + ATP + H2O = L-glutaminyl-tRNA(Gln) + L-glutamate + ADP + phosphate + H(+). It carries out the reaction L-aspartyl-tRNA(Asn) + L-glutamine + ATP + H2O = L-asparaginyl-tRNA(Asn) + L-glutamate + ADP + phosphate + 2 H(+). Its function is as follows. Allows the formation of correctly charged Asn-tRNA(Asn) or Gln-tRNA(Gln) through the transamidation of misacylated Asp-tRNA(Asn) or Glu-tRNA(Gln) in organisms which lack either or both of asparaginyl-tRNA or glutaminyl-tRNA synthetases. The reaction takes place in the presence of glutamine and ATP through an activated phospho-Asp-tRNA(Asn) or phospho-Glu-tRNA(Gln). The polypeptide is Aspartyl/glutamyl-tRNA(Asn/Gln) amidotransferase subunit B (Brucella suis (strain ATCC 23445 / NCTC 10510)).